A 507-amino-acid polypeptide reads, in one-letter code: Histidine ammonia-lyase (507 aa).

Positions A141–G143 form a cross-link, 5-imidazolinone (Ala-Gly). Position 142 is a 2,3-didehydroalanine (Ser) (S142).

The protein belongs to the PAL/histidase family. In terms of processing, contains an active site 4-methylidene-imidazol-5-one (MIO), which is formed autocatalytically by cyclization and dehydration of residues Ala-Ser-Gly.

Its subcellular location is the cytoplasm. It catalyses the reaction L-histidine = trans-urocanate + NH4(+). It functions in the pathway amino-acid degradation; L-histidine degradation into L-glutamate; N-formimidoyl-L-glutamate from L-histidine: step 1/3. The polypeptide is Histidine ammonia-lyase (Cereibacter sphaeroides (strain KD131 / KCTC 12085) (Rhodobacter sphaeroides)).